Reading from the N-terminus, the 185-residue chain is Serine/arginine-rich splicing factor RSZ21A (185 aa).

An RRM domain is found at 2 to 73 (ARVYVGNLDP…WRVELSRNAS (72 aa)). The CCHC-type zinc finger occupies 87 to 104 (SKCYECGETGHFARECRL). The interval 109–185 (GGLGSGRRRS…YDNGYRRSRS (77 aa)) is disordered. Residues 114–131 (GRRRSRSRSRSRSPRYRR) show a composition bias toward basic residues. Composition is skewed to low complexity over residues 132–145 (SPSY…PAGR) and 152–163 (VSPARARSYSRS).

This sequence belongs to the splicing factor SR family. Post-translationally, extensively phosphorylated on serine residues in the RS domain. Expressed in roots, leaves and immature seeds.

The protein resides in the nucleus. Functionally, involved in pre-mRNA splicing. This Oryza sativa subsp. japonica (Rice) protein is Serine/arginine-rich splicing factor RSZ21A (RSZ21A).